The primary structure comprises 610 residues: MCGIVGAVAQRDVAEILVEGLRRLEYRGYDSAGVAVVDSQSNLTRIRRLGKVQELADAVDQAEVVGGTGIAHTRWATHGEPSEINAHPHQSGDISVVHNGIIENHETLRELLQSRGYVFESQTDTEVIAHLVEWELRTAASLLEAVQKTVKQLEGAYGTVVLDRNDPSRIVVARSGSPIVIGFGVGENFLASDQLALLNVTRRFMYLEEGDVAEITRREVAVYDASGERVEREIAESNAEHDAGDKGQYRHFMQKEIYEQPTALINTMEGRITADSVVTEAIGVNAAEILSKVEHVQIVACGTSYNAGMTARYWFEDIAGVSCDVEIASEFRYRKFVTRPNSLLITLSQSGETADTLAALRLAKEKGYMAAMTICNVAGSSLVRESDFAFMTRAGVEIGVASTKAFTTQLAALLMLVTALGKQQGRISKEKEKEIVEALHALPKQINAALSFEKDIEALATDFADKHHTLFLGRGEFYPIAMEASLKLKEISYIHAEAYAAGELKHGPLALIDADMPVVVVAPSNDLLEKLKSNVEEVRARGGLLYVFADADAGFEGDETMKIITMPHVSEITAAIYYTIPMQLLSYYVALIKGTDVDQPRNLAKAVTVE.

Residue cysteine 2 is the Nucleophile; for GATase activity of the active site. Positions 2 to 218 constitute a Glutamine amidotransferase type-2 domain; that stretch reads CGIVGAVAQR…EGDVAEITRR (217 aa). SIS domains lie at 286-426 and 459-600; these read AAEI…QQGR and LATD…VDQP. The active-site For Fru-6P isomerization activity is lysine 605.

As to quaternary structure, homodimer.

It is found in the cytoplasm. It carries out the reaction D-fructose 6-phosphate + L-glutamine = D-glucosamine 6-phosphate + L-glutamate. In terms of biological role, catalyzes the first step in hexosamine metabolism, converting fructose-6P into glucosamine-6P using glutamine as a nitrogen source. The sequence is that of Glutamine--fructose-6-phosphate aminotransferase [isomerizing] from Vibrio vulnificus (strain CMCP6).